A 606-amino-acid chain; its full sequence is Dihydroxy-acid dehydratase ilvC, mitochondrial (606 aa).

C84 is a [2Fe-2S] cluster binding site. Residue D116 coordinates Mg(2+). C157 is a [2Fe-2S] cluster binding site. Mg(2+) is bound at residue D158. C232 contributes to the [2Fe-2S] cluster binding site. Residue E485 participates in Mg(2+) binding. The Proton acceptor role is filled by S511.

This sequence belongs to the IlvD/Edd family. It depends on [2Fe-2S] cluster as a cofactor. The cofactor is Mg(2+).

It localises to the mitochondrion. It carries out the reaction (2R)-2,3-dihydroxy-3-methylbutanoate = 3-methyl-2-oxobutanoate + H2O. The enzyme catalyses (2R,3R)-2,3-dihydroxy-3-methylpentanoate = (S)-3-methyl-2-oxopentanoate + H2O. It participates in amino-acid biosynthesis; L-isoleucine biosynthesis; L-isoleucine from 2-oxobutanoate: step 3/4. It functions in the pathway amino-acid biosynthesis; L-valine biosynthesis; L-valine from pyruvate: step 3/4. DHAD activity is inhibited in dose-dependent manner by 2-hydroxy-3-methylbutyric acid with an IC(50) of about 8 mM. Dihydroxyacid dehydratase that catalyzes the third step in the common pathway leading to biosynthesis of branched-chain amino acids. Catalyzes the dehydration of (2R,3R)-2,3-dihydroxy-3-methylpentanoate (2,3-dihydroxy-3-methylvalerate) into 2-oxo-3-methylpentanoate (2-oxo-3-methylvalerate) and of (2R)-2,3-dihydroxy-3-methylbutanoate (2,3-dihydroxyisovalerate) into 2-oxo-3-methylbutanoate (2-oxoisovalerate), the penultimate precursor to L-isoleucine and L-valine, respectively. IlvC and the branched-chain amino acid biosynthesis are crucial for virulence and may be a potential target to develop antifungal agents. The polypeptide is Dihydroxy-acid dehydratase ilvC, mitochondrial (Aspergillus fumigatus (strain ATCC MYA-4609 / CBS 101355 / FGSC A1100 / Af293) (Neosartorya fumigata)).